Here is a 186-residue protein sequence, read N- to C-terminus: LSM12 homolog B (186 aa).

The Sm domain occupies 1–74 (MSSLAPCFTV…CMDIEIVKEA (74 aa)). Positions 84-186 (EPIDLPMIRE…VVQNFCSKQF (103 aa)) constitute an AD domain.

The protein belongs to the LSM12 family. Interacts with Sbat; along with Sbat and Vlet, may form an accessory subcomplex involved in SMN complex function.

Functionally, may have an accessory function in the survival motor neuron (SMN) complex. This chain is LSM12 homolog B, found in Drosophila melanogaster (Fruit fly).